A 122-amino-acid chain; its full sequence is Large ribosomal subunit protein uL14 (122 aa).

This sequence belongs to the universal ribosomal protein uL14 family. Part of the 50S ribosomal subunit. Forms a cluster with proteins L3 and L19. In the 70S ribosome, L14 and L19 interact and together make contacts with the 16S rRNA in bridges B5 and B8.

Its function is as follows. Binds to 23S rRNA. Forms part of two intersubunit bridges in the 70S ribosome. This is Large ribosomal subunit protein uL14 from Orientia tsutsugamushi (strain Ikeda) (Rickettsia tsutsugamushi).